We begin with the raw amino-acid sequence, 250 residues long: Keratin-associated protein 9-1 (250 aa).

32 tandem repeats follow at residues 8–12, 13–17, 18–22, 37–41, 42–46, 51–55, 56–60, 61–65, 66–70, 75–79, 80–84, 85–89, 90–94, 95–99, 105–109, 114–117, 118–121, 133–137, 138–142, 143–147, 153–157, 162–166, 167–171, 176–180, 185–189, 190–194, 214–218, 219–223, 229–233, 234–238, 239–243, and 244–248. Positions 8–248 are 32 X 5 AA repeats of C-C-[CGSVRQH]-[SQTNP]-[PTSI]; the sequence is CCQPTCCRTT…CCVSSCCQPS (241 aa).

Belongs to the KRTAP type 9 family. As to quaternary structure, interacts with hair keratins.

In terms of biological role, in the hair cortex, hair keratin intermediate filaments are embedded in an interfilamentous matrix, consisting of hair keratin-associated proteins (KRTAP), which are essential for the formation of a rigid and resistant hair shaft through their extensive disulfide bond cross-linking with abundant cysteine residues of hair keratins. The matrix proteins include the high-sulfur and high-glycine-tyrosine keratins. This Homo sapiens (Human) protein is Keratin-associated protein 9-1.